Consider the following 798-residue polypeptide: Phenylalanine--tRNA ligase beta subunit (798 aa).

Residues Phe-39–Val-148 form the tRNA-binding domain. Residues Trp-402 to Pro-478 enclose the B5 domain. 4 residues coordinate Mg(2+): Asp-456, Asp-462, Glu-465, and Glu-466. Residues Pro-708–Ile-798 enclose the FDX-ACB domain.

The protein belongs to the phenylalanyl-tRNA synthetase beta subunit family. Type 1 subfamily. Tetramer of two alpha and two beta subunits. Requires Mg(2+) as cofactor.

It localises to the cytoplasm. It carries out the reaction tRNA(Phe) + L-phenylalanine + ATP = L-phenylalanyl-tRNA(Phe) + AMP + diphosphate + H(+). The protein is Phenylalanine--tRNA ligase beta subunit of Nitratidesulfovibrio vulgaris (strain ATCC 29579 / DSM 644 / CCUG 34227 / NCIMB 8303 / VKM B-1760 / Hildenborough) (Desulfovibrio vulgaris).